Reading from the N-terminus, the 833-residue chain is Protein translocase subunit SecA (833 aa).

Residues Q87, 105–109 (GEGKT), and D494 contribute to the ATP site. The tract at residues 789 to 816 (PAAVAYSGGEAEAGPAQPHREDPKVGRN) is disordered. Over residues 806 to 815 (PHREDPKVGR) the composition is skewed to basic and acidic residues. C819, C821, C830, and C831 together coordinate Zn(2+).

Belongs to the SecA family. Monomer and homodimer. Part of the essential Sec protein translocation apparatus which comprises SecA, SecYEG and auxiliary proteins SecDF-YajC and YidC. Zn(2+) serves as cofactor.

The protein localises to the cell inner membrane. It localises to the cytoplasm. It catalyses the reaction ATP + H2O + cellular proteinSide 1 = ADP + phosphate + cellular proteinSide 2.. In terms of biological role, part of the Sec protein translocase complex. Interacts with the SecYEG preprotein conducting channel. Has a central role in coupling the hydrolysis of ATP to the transfer of proteins into and across the cell membrane, serving as an ATP-driven molecular motor driving the stepwise translocation of polypeptide chains across the membrane. The protein is Protein translocase subunit SecA of Nitratidesulfovibrio vulgaris (strain ATCC 29579 / DSM 644 / CCUG 34227 / NCIMB 8303 / VKM B-1760 / Hildenborough) (Desulfovibrio vulgaris).